A 234-amino-acid chain; its full sequence is 3,4-dihydroxy-2-butanone 4-phosphate synthase (234 aa).

Residues 39–40 (RE), D44, 152–156 (RRGHT), and E176 each bind D-ribulose 5-phosphate. Residue E40 coordinates Mg(2+). Residue H155 coordinates Mg(2+).

Belongs to the DHBP synthase family. As to quaternary structure, homodimer. Mg(2+) is required as a cofactor. It depends on Mn(2+) as a cofactor.

It catalyses the reaction D-ribulose 5-phosphate = (2S)-2-hydroxy-3-oxobutyl phosphate + formate + H(+). Its pathway is cofactor biosynthesis; riboflavin biosynthesis; 2-hydroxy-3-oxobutyl phosphate from D-ribulose 5-phosphate: step 1/1. Functionally, catalyzes the conversion of D-ribulose 5-phosphate to formate and 3,4-dihydroxy-2-butanone 4-phosphate. This is 3,4-dihydroxy-2-butanone 4-phosphate synthase from Pelobacter propionicus (strain DSM 2379 / NBRC 103807 / OttBd1).